A 1163-amino-acid chain; its full sequence is Zinc finger protein 516 (1163 aa).

Residues M1 to R13 show a composition bias toward basic and acidic residues. A disordered region spans residues M1–V26. The interval M1–A431 is mediates promoter DNA-binding and activation of transcription. 7 C2H2-type zinc fingers span residues H34–H56, Y62–H84, V174–H197, F200–H223, F248–H270, H276–H298, and E335–H357. The segment covering S460–D469 has biased composition (basic and acidic residues). Disordered regions lie at residues S460–G512, H533–H667, and H679–L730. The segment covering R496–A507 has biased composition (low complexity). The C2H2-type 8 zinc finger occupies S515–H537. Positions R542–A552 are enriched in basic and acidic residues. The segment covering E561–G572 has biased composition (polar residues). Acidic residues predominate over residues E588 to A598. Over residues E615–D625 the composition is skewed to polar residues. The segment covering Q626–E641 has biased composition (basic and acidic residues). A Glycyl lysine isopeptide (Lys-Gly) (interchain with G-Cter in SUMO2) cross-link involves residue K643. Over residues S656–H667 the composition is skewed to basic and acidic residues. K681 participates in a covalent cross-link: Glycyl lysine isopeptide (Lys-Gly) (interchain with G-Cter in SUMO2). Residues P706 to G720 are compositionally biased toward basic and acidic residues. The segment at H760–H783 adopts a C2H2-type 9; atypical zinc-finger fold. Residues T838–A1007 are disordered. Residues V840–V857 show a composition bias toward low complexity. Residues K1043 and K1062 each participate in a glycyl lysine isopeptide (Lys-Gly) (interchain with G-Cter in SUMO2) cross-link. A C2H2-type 10 zinc finger spans residues F1098–H1120. Positions S1126–T1163 are disordered.

This sequence belongs to the krueppel C2H2-type zinc-finger protein family. Interacts with PRDM16; the interaction is direct and may play a role in the transcription of brown adipose tissue-specific genes. Interacts with PWWP2B. Interacts with HDAC1; this interaction is enhanced in the presence of PWWP2B.

It is found in the nucleus. Functionally, transcriptional regulator that binds to the promoter and activates the transcription of genes promoting brown adipose tissue (BAT) differentiation. Among brown adipose tissue-specific genes, binds the proximal region of the promoter of the UCP1 gene to activate its transcription and thereby regulate thermogenesis. May also play a role in the cellular response to replication stress. This chain is Zinc finger protein 516, found in Homo sapiens (Human).